Here is a 157-residue protein sequence, read N- to C-terminus: 17.8 kDa class I heat shock protein (157 aa).

Residues 41 to 156 enclose the sHSP domain; that stretch reads ETSAITNARV…KAQVKSIDIS (116 aa).

Belongs to the small heat shock protein (HSP20) family. In terms of assembly, homodimer under normal physiological conditions. Aggregates in high oligomeric complexes after heat shock. Binds to AKR2A and to chloroplasts. Expressed ubiquitously at low levels under normal physiological conditions.

The protein localises to the cytoplasm. In terms of biological role, cytosolic mediator for sorting and targeting of nascent chloroplast outer envelope membrane (OEM) proteins to the chloroplast. Functions as an AKR2A cofactor to facilitate the targeting of OEP7 to chloroplasts. In Arabidopsis thaliana (Mouse-ear cress), this protein is 17.8 kDa class I heat shock protein (HSP17.8).